A 485-amino-acid polypeptide reads, in one-letter code: Aspartyl/glutamyl-tRNA(Asn/Gln) amidotransferase subunit B (485 aa).

Belongs to the GatB/GatE family. GatB subfamily. Heterotrimer of A, B and C subunits.

The catalysed reaction is L-glutamyl-tRNA(Gln) + L-glutamine + ATP + H2O = L-glutaminyl-tRNA(Gln) + L-glutamate + ADP + phosphate + H(+). The enzyme catalyses L-aspartyl-tRNA(Asn) + L-glutamine + ATP + H2O = L-asparaginyl-tRNA(Asn) + L-glutamate + ADP + phosphate + 2 H(+). Functionally, allows the formation of correctly charged Asn-tRNA(Asn) or Gln-tRNA(Gln) through the transamidation of misacylated Asp-tRNA(Asn) or Glu-tRNA(Gln) in organisms which lack either or both of asparaginyl-tRNA or glutaminyl-tRNA synthetases. The reaction takes place in the presence of glutamine and ATP through an activated phospho-Asp-tRNA(Asn) or phospho-Glu-tRNA(Gln). This is Aspartyl/glutamyl-tRNA(Asn/Gln) amidotransferase subunit B from Borrelia duttonii (strain Ly).